We begin with the raw amino-acid sequence, 493 residues long: MGTTKVTPSLVFAVTVATIGSFQFGYNTGVINAPETILKDFLNYTLEERLEDLPSEGLLTALWSLCVAIFSVGGMIGSFSVGLFVNRFGRRNSMLLVNLLAIIAGCLMGFAKIAESVEMLILGRLLIGIFCGLCTGFVPMYIGEVSPTALRGAFGTLNQLGIVVGILVAQIFGLDFILGSEELWPGLLGLTIIPAILQSAALPFCPESPRFLLINKKEEDQATEILQRLWGTSDVVQEIQEMKDESVRMSQEKQVTVLELFRSPNYVQPLLISIVLQLSQQLSGINAVFYYSTGIFKDAGVQEPIYATIGAGVVNTIFTVVSLFLVERAGRRTLHMIGLGGMAVCSVFMTISLLLKDDYEAMSFVCIVAILIYVAFFEIGPGPIPWFIVAELFSQGPRPAAIAVAGCCNWTSNFLVGMLFPSAAAYLGAYVFIIFAAFLIFFLIFTFFKVPETKGRTFEDIARAFEGQAHSGKGPAGVELNSMQPVKETPGNA.

Over 1–10 (MGTTKVTPSL) the chain is Cytoplasmic. The chain crosses the membrane as a helical span at residues 11–32 (VFAVTVATIGSFQFGYNTGVIN). Topologically, residues 33-64 (APETILKDFLNYTLEERLEDLPSEGLLTALWS) are extracellular. Asparagine 43 carries an N-linked (GlcNAc...) asparagine glycan. Residues 65-85 (LCVAIFSVGGMIGSFSVGLFV) form a helical membrane-spanning segment. Residues 86–90 (NRFGR) are Cytoplasmic-facing. Residues 91–111 (RNSMLLVNLLAIIAGCLMGFA) form a helical membrane-spanning segment. Topologically, residues 112 to 118 (KIAESVE) are extracellular. A helical transmembrane segment spans residues 119–142 (MLILGRLLIGIFCGLCTGFVPMYI). At 143 to 153 (GEVSPTALRGA) the chain is on the cytoplasmic side. Residues 154–174 (FGTLNQLGIVVGILVAQIFGL) traverse the membrane as a helical segment. Glutamine 159 is a D-glucose binding site. The Extracellular segment spans residues 175 to 183 (DFILGSEEL). Residues 184–204 (WPGLLGLTIIPAILQSAALPF) traverse the membrane as a helical segment. Residues 205–269 (CPESPRFLLI…LFRSPNYVQP (65 aa)) lie on the Cytoplasmic side of the membrane. At threonine 232 the chain carries Phosphothreonine. The helical transmembrane segment at 270-290 (LLISIVLQLSQQLSGINAVFY) threads the bilayer. Residues 277-279 (QLS) form an important for selectivity against fructose region. D-glucose-binding positions include 280-281 (QQ) and asparagine 286. The Extracellular segment spans residues 291-304 (YSTGIFKDAGVQEP). The helical transmembrane segment at 305 to 325 (IYATIGAGVVNTIFTVVSLFL) threads the bilayer. Residue asparagine 315 coordinates D-glucose. Topologically, residues 326–331 (VERAGR) are cytoplasmic. The helical transmembrane segment at 332-352 (RTLHMIGLGGMAVCSVFMTIS) threads the bilayer. The Extracellular portion of the chain corresponds to 353-363 (LLLKDDYEAMS). A helical transmembrane segment spans residues 364–389 (FVCIVAILIYVAFFEIGPGPIPWFIV). Positions 378 and 386 each coordinate D-glucose. The Cytoplasmic portion of the chain corresponds to 390–399 (AELFSQGPRP). A helical membrane pass occupies residues 400-420 (AAIAVAGCCNWTSNFLVGMLF). Topologically, residues 421-429 (PSAAAYLGA) are extracellular. Residues 430–450 (YVFIIFAAFLIFFLIFTFFKV) traverse the membrane as a helical segment. Residues 451–493 (PETKGRTFEDIARAFEGQAHSGKGPAGVELNSMQPVKETPGNA) are Cytoplasmic-facing. The segment at 469 to 493 (AHSGKGPAGVELNSMQPVKETPGNA) is disordered. Phosphoserine occurs at positions 471 and 482. A Phosphothreonine modification is found at threonine 489.

Belongs to the major facilitator superfamily. Sugar transporter (TC 2.A.1.1) family. Glucose transporter subfamily. As to quaternary structure, interacts with SMIM43; the interaction may promote SLC2A3-mediated glucose transport to meet the energy needs of mesendoderm differentiation. In terms of tissue distribution, expressed in spermatozoa (at protein level). Detected in brain (at protein level). Abundantly expressed in the hippocampus, cerebellum and cerebral cortex with lower expression in the dentate gyrus and piriform cortex.

The protein resides in the cell membrane. The protein localises to the perikaryon. It is found in the cell projection. It carries out the reaction D-glucose(out) = D-glucose(in). It catalyses the reaction D-galactose(in) = D-galactose(out). Deoxyglucose transport is inhibited by D-glucose, D-galactose and maltose. Galactose transport is inhibited by D-glucose and maltose. Facilitative glucose transporter. Can also mediate the uptake of various other monosaccharides across the cell membrane. Mediates the uptake of glucose, 2-deoxyglucose, galactose, mannose, xylose and fucose, and probably also dehydroascorbate. Does not mediate fructose transport. Required for mesendoderm differentiation. The polypeptide is Solute carrier family 2, facilitated glucose transporter member 3 (Mus musculus (Mouse)).